The chain runs to 274 residues: NADPH-dependent 7-cyano-7-deazaguanine reductase (274 aa).

Residue 81 to 83 (IES) coordinates substrate. NADPH is bound at residue 83–84 (SK). C182 functions as the Thioimide intermediate in the catalytic mechanism. D189 (proton donor) is an active-site residue. 221-222 (HE) contacts substrate. 250-251 (RG) provides a ligand contact to NADPH.

The protein belongs to the GTP cyclohydrolase I family. QueF type 2 subfamily. In terms of assembly, homodimer.

The protein localises to the cytoplasm. The catalysed reaction is 7-aminomethyl-7-carbaguanine + 2 NADP(+) = 7-cyano-7-deazaguanine + 2 NADPH + 3 H(+). It functions in the pathway tRNA modification; tRNA-queuosine biosynthesis. Functionally, catalyzes the NADPH-dependent reduction of 7-cyano-7-deazaguanine (preQ0) to 7-aminomethyl-7-deazaguanine (preQ1). The polypeptide is NADPH-dependent 7-cyano-7-deazaguanine reductase (Hahella chejuensis (strain KCTC 2396)).